Reading from the N-terminus, the 188-residue chain is Peptidyl-tRNA hydrolase (188 aa).

Tyrosine 17 is a tRNA binding site. Histidine 22 functions as the Proton acceptor in the catalytic mechanism. 3 residues coordinate tRNA: tyrosine 65, asparagine 67, and asparagine 113.

The protein belongs to the PTH family. Monomer.

The protein localises to the cytoplasm. It catalyses the reaction an N-acyl-L-alpha-aminoacyl-tRNA + H2O = an N-acyl-L-amino acid + a tRNA + H(+). Functionally, hydrolyzes ribosome-free peptidyl-tRNAs (with 1 or more amino acids incorporated), which drop off the ribosome during protein synthesis, or as a result of ribosome stalling. In terms of biological role, catalyzes the release of premature peptidyl moieties from peptidyl-tRNA molecules trapped in stalled 50S ribosomal subunits, and thus maintains levels of free tRNAs and 50S ribosomes. This is Peptidyl-tRNA hydrolase from Mycoplasma pneumoniae (strain ATCC 29342 / M129 / Subtype 1) (Mycoplasmoides pneumoniae).